A 1748-amino-acid polypeptide reads, in one-letter code: Non-structural replication polyprotein (1748 aa).

The region spanning 58–219 (SGLTSTPHPH…NQPVNALDWL (162 aa)) is the Alphavirus-like MT domain. Disordered stretches follow at residues 433-507 (APLS…PPLT) and 569-633 (PASP…PAPL). A compositionally biased stretch (low complexity) spans 458 to 475 (SASQSTSLSLSASSQLLS). Polar residues predominate over residues 491–500 (VSTSCPSASK). Residues 579 to 600 (HPLPPAQKPPRPPTTVPTPKPL) show a composition bias toward pro residues. The segment covering 601–616 (ASPSQTQAAQPATQSP) has biased composition (low complexity). Residues 627–781 (SLLPAPLETD…PLRAGSPPSR (155 aa)) enclose the Peptidase C21 domain. Residues Cys-680 and His-766 each act as for protease activity in the active site. Residues 767 to 786 (FTAPDPLRAGSPPSRSQTNE) form a disordered region. One can recognise a (+)RNA virus helicase ATP-binding domain in the interval 844–1001 (SGPSPRDRIF…RLLPFIDYYC (158 aa)). Position 874-881 (874-881 (GFAGCGKT)) interacts with ATP. The (+)RNA virus helicase C-terminal domain maps to 1002–1138 (YWSYRVPKCV…LPDFFPEIVF (137 aa)). Residues 1474–1580 (SHCTTNDYTA…SGTLSPRSNW (107 aa)) enclose the RdRp catalytic domain.

This sequence belongs to the Tymoviridae non-structural replication polyprotein family. Specific enzymatic cleavages by the host yield mature proteins.

It carries out the reaction RNA(n) + a ribonucleoside 5'-triphosphate = RNA(n+1) + diphosphate. Functionally, acts as a cysteine protease, methyltransferase and deubiquitinase. The cysteine protease activity cleaves the polyprotein giving rise to mature proteins. The methyltransferase domain is probably involved in viral RNA capping. RNA-directed RNA polymerase is responsible for the replication and transcription of the genome. The polypeptide is Non-structural replication polyprotein (Erysimum latent virus (ELV)).